Here is a 615-residue protein sequence, read N- to C-terminus: 1-deoxy-D-xylulose-5-phosphate synthase (615 aa).

Thiamine diphosphate is bound by residues His77 and 118-120 (GHS). Asp149 provides a ligand contact to Mg(2+). Thiamine diphosphate contacts are provided by residues 150 to 151 (GA), Asn178, Tyr286, and Glu367. Asn178 is a Mg(2+) binding site.

Belongs to the transketolase family. DXPS subfamily. In terms of assembly, homodimer. Mg(2+) is required as a cofactor. Requires thiamine diphosphate as cofactor.

It catalyses the reaction D-glyceraldehyde 3-phosphate + pyruvate + H(+) = 1-deoxy-D-xylulose 5-phosphate + CO2. Its pathway is metabolic intermediate biosynthesis; 1-deoxy-D-xylulose 5-phosphate biosynthesis; 1-deoxy-D-xylulose 5-phosphate from D-glyceraldehyde 3-phosphate and pyruvate: step 1/1. Its function is as follows. Catalyzes the acyloin condensation reaction between C atoms 2 and 3 of pyruvate and glyceraldehyde 3-phosphate to yield 1-deoxy-D-xylulose-5-phosphate (DXP). The sequence is that of 1-deoxy-D-xylulose-5-phosphate synthase from Glaesserella parasuis serovar 5 (strain SH0165) (Haemophilus parasuis).